We begin with the raw amino-acid sequence, 192 residues long: Fe/S biogenesis protein NfuA (192 aa).

[4Fe-4S] cluster-binding residues include Cys-149 and Cys-152.

Belongs to the NfuA family. As to quaternary structure, homodimer. It depends on [4Fe-4S] cluster as a cofactor.

Involved in iron-sulfur cluster biogenesis. Binds a 4Fe-4S cluster, can transfer this cluster to apoproteins, and thereby intervenes in the maturation of Fe/S proteins. Could also act as a scaffold/chaperone for damaged Fe/S proteins. This chain is Fe/S biogenesis protein NfuA, found in Shewanella sediminis (strain HAW-EB3).